The chain runs to 210 residues: N-(5'-phosphoribosyl)anthranilate isomerase (210 aa).

This sequence belongs to the TrpF family.

It catalyses the reaction N-(5-phospho-beta-D-ribosyl)anthranilate = 1-(2-carboxyphenylamino)-1-deoxy-D-ribulose 5-phosphate. It participates in amino-acid biosynthesis; L-tryptophan biosynthesis; L-tryptophan from chorismate: step 3/5. The polypeptide is N-(5'-phosphoribosyl)anthranilate isomerase (Methanococcus aeolicus (strain ATCC BAA-1280 / DSM 17508 / OCM 812 / Nankai-3)).